A 333-amino-acid polypeptide reads, in one-letter code: Acyl-CoA wax alcohol acyltransferase 2 (333 aa).

The next 3 helical transmembrane spans lie at 15-35, 38-58, and 130-150; these read VFAVFQWSFSALLITTTVIAV, YLVVFTPYWPVTVLILTWLAF, and IFPGITPYILTLGAFFWMPFL.

The protein belongs to the diacylglycerol acyltransferase family. As to quaternary structure, monomer. In terms of tissue distribution, highly expressed in skin, where it is primarily restricted to undifferentiated peripheral sebocytes. Also expressed at lower level in other tissues except pancreas.

The protein resides in the endoplasmic reticulum membrane. It carries out the reaction a long chain fatty alcohol + a fatty acyl-CoA = a wax ester + CoA. It catalyses the reaction all-trans-retinol + an acyl-CoA = an all-trans-retinyl ester + CoA. The enzyme catalyses an acyl-CoA + a 1,2-diacyl-sn-glycerol = a triacyl-sn-glycerol + CoA. The catalysed reaction is 11-cis-retinol + a fatty acyl-CoA = 11-cis-retinyl ester + CoA. It carries out the reaction 9-cis-retinol + a fatty acyl-CoA = 9-cis-retinyl ester + CoA. It catalyses the reaction 13-cis-retinol + a fatty acyl-CoA = 13-cis-retinyl ester + CoA. The enzyme catalyses a 1-acylglycerol + an acyl-CoA = a 1,2-diacylglycerol + CoA. The catalysed reaction is 1-O-alkylglycerol + an acyl-CoA = 1-O-alkyl-3-acylglycerol + CoA. It carries out the reaction a 2-acylglycerol + an acyl-CoA = a 1,2-diacyl-sn-glycerol + CoA. It catalyses the reaction 2-(9Z-octadecenoyl)-glycerol + hexadecanoyl-CoA = 1-hexadecanoyl-2-(9Z-octadecenoyl)-sn-glycerol + CoA. The enzyme catalyses 1,2-di-(9Z-octadecenoyl)-sn-glycerol + hexadecanoyl-CoA = 1,2-di-(9Z)-octadecenoyl-3-hexadecanoyl-sn-glycerol + CoA. The catalysed reaction is hexadecan-1-ol + hexadecanoyl-CoA = hexadecanyl hexadecanoate + CoA. It carries out the reaction hexadecane-1,2-diol + hexadecanoyl-CoA = 2-hydroxyhexadecyl hexadecanoate + CoA. It catalyses the reaction 9-cis-retinol + hexadecanoyl-CoA = 9-cis-retinyl hexadecanoate + CoA. The enzyme catalyses all-trans-retinol + hexadecanoyl-CoA = all-trans-retinyl hexadecanoate + CoA. The catalysed reaction is 1,2-di-(9Z-octadecenoyl)-sn-glycerol + (9Z)-octadecenoyl-CoA = 1,2,3-tri-(9Z-octadecenoyl)-glycerol + CoA. It carries out the reaction hexadecan-1-ol + (9Z)-octadecenoyl-CoA = hexadecanyl (9Z)-octadecenoate + CoA. It catalyses the reaction (9Z)-hexadecen-1-ol + (9Z)-octadecenoyl-CoA = 1-O-(9Z)-hexadecenyl (9Z)-octadecenoate + CoA. The enzyme catalyses octadecan-1-ol + (9Z)-octadecenoyl-CoA = 1-O-octadecyl (9Z)-octadecenoate + CoA. The catalysed reaction is (9Z)-octadecen-1-ol + (9Z)-octadecenoyl-CoA = 1-O-(9Z)-octadecenyl (9Z)-octadecenoate + CoA. It carries out the reaction hexadecan-1-ol + (9Z)-hexadecenoyl-CoA = 1-O-hexadecyl (9Z)-hexadecenoate + CoA. It catalyses the reaction hexadecan-1-ol + octadecanoyl-CoA = hexadecanyl octadecanoate + CoA. The enzyme catalyses 11-cis-retinol + hexadecanoyl-CoA = 11-cis-retinyl hexadecanoate + CoA. The catalysed reaction is 1-O-(9Z-octadecenyl)-glycerol + (9Z)-octadecenoyl-CoA = 1-O-(9Z-octadecyl)-3-(9Z-octadecenoyl)-glycerol + CoA. It carries out the reaction 1-(9Z-octadecenoyl)-glycerol + (9Z)-octadecenoyl-CoA = 1,2-di-(9Z-octadecenoyl)-glycerol + CoA. It catalyses the reaction 11-cis-retinol + tetradecanoyl-CoA = 11-cis-retinyl tetradecanoate + CoA. The enzyme catalyses 9-cis-retinol + tetradecanoyl-CoA = 9-cis-retinyl tetradecanoate + CoA. The catalysed reaction is 13-cis-retinol + tetradecanoyl-CoA = 13-cis-retinyl tetradecanoate + CoA. It carries out the reaction all-trans-retinol + tetradecanoyl-CoA = all-trans-retinyl tetradecanoate + CoA. It catalyses the reaction tetradecan-1-ol + tetradecanoyl-CoA = tetradecanyl tetradecanoate + CoA. 11-cis retinoids act as allosteric modulators of acyl-CoA retinol O-fatty-acyltransferase (ARAT) activity by suppressing esterification of 9-cis, 13-cis, or all-trans retinols concurrently increasing the enzyme specificity toward 11-cis isomer. Functionally, acyltransferase that catalyzes the formation of ester bonds between fatty alcohols and fatty acyl-CoAs to form wax monoesters. Shows a preference for medium chain acyl-CoAs from C12 to C16 in length and fatty alcohols shorter than C20, as the acyl donors and acceptors, respectively. Also possesses acyl-CoA retinol acyltransferase (ARAT) activity that preferentially esterifies 11-cis-retinol, a chromophore precursor of bleached opsin pigments in cone cells. Shows higher catalytic efficiency toward 11-cis-retinol versus 9-cis-retinol, 13-cis-retinol, and all-trans-retinol substrates. This Homo sapiens (Human) protein is Acyl-CoA wax alcohol acyltransferase 2 (AWAT2).